Reading from the N-terminus, the 211-residue chain is MANTDRPALPHKRAVPPSRADSGPRRRRTKLLDAVAGFGVTLGSMFKKTVTEEYPERPGPVAARYHGRHQLNRYPDGLEKCIGCELCAWACPADAIYVEGADNTEEERFSPGERYGRVYQINYLRCIGCGLCIEACPTRALTMTYDYELADDNRADLIYEKDRLLAPLLPEMAAPPHPRAPGATDKDYYLGNVTAEGLRGVRESQTTGDSR.

A disordered region spans residues 1 to 27; the sequence is MANTDRPALPHKRAVPPSRADSGPRRR. 2 consecutive 4Fe-4S ferredoxin-type domains span residues 71 to 101 and 117 to 146; these read LNRY…VEGA and RVYQ…MTYD. [4Fe-4S] cluster is bound by residues cysteine 81, cysteine 84, cysteine 87, cysteine 91, cysteine 126, cysteine 129, cysteine 132, and cysteine 136.

It belongs to the complex I 23 kDa subunit family. In terms of assembly, NDH-1 is composed of 14 different subunits. Subunits NuoA, H, J, K, L, M, N constitute the membrane sector of the complex. The cofactor is [4Fe-4S] cluster.

It localises to the cell membrane. It catalyses the reaction a quinone + NADH + 5 H(+)(in) = a quinol + NAD(+) + 4 H(+)(out). Its function is as follows. NDH-1 shuttles electrons from NADH, via FMN and iron-sulfur (Fe-S) centers, to quinones in the respiratory chain. The immediate electron acceptor for the enzyme in this species is believed to be menaquinone. Couples the redox reaction to proton translocation (for every two electrons transferred, four hydrogen ions are translocated across the cytoplasmic membrane), and thus conserves the redox energy in a proton gradient. The protein is NADH-quinone oxidoreductase subunit I of Mycobacterium bovis (strain ATCC BAA-935 / AF2122/97).